Consider the following 497-residue polypeptide: Pancreatic alpha-amylase (497 aa).

Gln1 carries the pyrrolidone carboxylic acid modification. 3 disulfide bridges follow: Cys28-Cys86, Cys70-Cys115, and Cys141-Cys160. 3 residues coordinate Ca(2+): Asn100, Arg158, and Asp167. Arg195 contributes to the chloride binding site. Residue Asp197 is the Nucleophile of the active site. His201 is a binding site for Ca(2+). The active-site Proton donor is the Glu233. The chloride site is built by Asn298 and Arg337. 2 disulfide bridges follow: Cys379/Cys385 and Cys451/Cys463.

The protein belongs to the glycosyl hydrolase 13 family. As to quaternary structure, monomer. Ca(2+) is required as a cofactor. Chloride serves as cofactor.

The protein localises to the secreted. The protein resides in the extracellular space. The catalysed reaction is Endohydrolysis of (1-&gt;4)-alpha-D-glucosidic linkages in polysaccharides containing three or more (1-&gt;4)-alpha-linked D-glucose units.. In Struthio camelus (Common ostrich), this protein is Pancreatic alpha-amylase.